The chain runs to 131 residues: Antileukoproteinase (131 aa).

The first 25 residues, 1 to 25 (MKSCGLLPFTVLLALGILAPWTVEG), serve as a signal peptide directing secretion. WAP domains follow at residues 29–77 (DAIK…VNPV) and 83–131 (VWRK…LPPM). 8 cysteine pairs are disulfide-bonded: C36–C65, C44–C69, C52–C64, C58–C73, C90–C119, C97–C123, C106–C118, and C112–C127. Positions 85–131 (RKPGRCVKTQARCMMLNPPNVCQRDGQCDGKYKCCEGICGKVCLPPM) are elastase inhibitory domain.

In terms of assembly, interacts with GRN; interaction protects progranulin from proteolysis. As to expression, detected in bronchial epithelial cells. Detected in bronchoalveolar fluid after infection with M.tuberculosis (at protein level). Highest expression in lung, spleen, intestine and epididymis with lower levels in liver and seminal vesicle. No expression in brain, heart, kidney and muscle.

The protein resides in the secreted. Its function is as follows. Acid-stable proteinase inhibitor with strong affinities for trypsin, chymotrypsin, elastase, and cathepsin G. Modulates the innate immune response after bacterial infection. Contributes to regulate the inflammatory and immune responses to the intracellular parasite L.major. Down-regulates responses to bacterial lipopolysaccharide (LPS). Plays a role in regulating the activation of NF-kappa-B and inflammatory responses. Has antimicrobial activity against mycobacteria, but not against salmonella. Contributes to normal resistance against infection by M.tuberculosis. Required for normal resistance to L.major. Required for normal wound healing, probably by preventing tissue damage by limiting protease activity. Together with ELANE, required for normal differentiation and proliferation of bone marrow myeloid cells. This is Antileukoproteinase (Slpi) from Mus musculus (Mouse).